The sequence spans 983 residues: Ephrin type-A receptor 3 (983 aa).

The N-terminal stretch at methionine 1–glycine 20 is a signal peptide. Residues glutamate 21–histidine 540 are Extracellular-facing. The Eph LBD domain occupies glutamate 29–lysine 206. N-linked (GlcNAc...) asparagine glycans are attached at residues asparagine 231, asparagine 336, asparagine 390, asparagine 403, and asparagine 492. 2 Fibronectin type-III domains span residues proline 324 to alanine 434 and alanine 435 to aspartate 530. Residues valine 541 to glycine 564 traverse the membrane as a helical segment. At arginine 565–valine 983 the chain is on the cytoplasmic side. Tyrosine 596 and tyrosine 602 each carry phosphotyrosine; by autocatalysis. The Protein kinase domain maps to isoleucine 621–isoleucine 882. ATP-binding positions include glycine 628–glycine 633, lysine 653, and glutamate 700–serine 706. Tyrosine 701 is modified (phosphotyrosine; by autocatalysis). The active-site Proton acceptor is the aspartate 746. Arginine 750–asparagine 751 serves as a coordination point for ATP. Position 779 is a phosphotyrosine; by autocatalysis (tyrosine 779). The region spanning alanine 911–glutamine 975 is the SAM domain. At tyrosine 937 the chain carries Phosphotyrosine. A PDZ-binding motif is present at residues valine 981–valine 983.

This sequence belongs to the protein kinase superfamily. Tyr protein kinase family. Ephrin receptor subfamily. As to quaternary structure, heterotetramer upon binding of the ligand. The heterotetramer is composed of an ephrin dimer and a receptor dimer. Oligomerization is probably required to induce biological responses. Forms a ternary EFNA5-EPHA3-ADAM10 complex mediating EFNA5 extracellular domain shedding by ADAM10 which regulates the EFNA5-EPHA3 complex internalization and function. Interacts (phosphorylated) with PTPN1; dephosphorylates EPHA3 and may regulate its trafficking and function. Interacts (phosphorylated) with CRK; mediates EFNA5-EPHA3 signaling through RHOA GTPase activation. Interacts with NCK1 (via SH2 domain); mediates EFNA5-EPHA3 signaling. Post-translationally, autophosphorylates upon activation by EFNA5. Phosphorylation on Tyr-602 mediates interaction with NCK1. Dephosphorylated by PTPN1. As to expression, greatest levels of expression occurring in the brain, also detected in testis. Expressed in myogenic progenitor cells.

It is found in the cell membrane. It localises to the secreted. The catalysed reaction is L-tyrosyl-[protein] + ATP = O-phospho-L-tyrosyl-[protein] + ADP + H(+). Functionally, receptor tyrosine kinase which binds promiscuously membrane-bound ephrin family ligands residing on adjacent cells, leading to contact-dependent bidirectional signaling into neighboring cells. The signaling pathway downstream of the receptor is referred to as forward signaling while the signaling pathway downstream of the ephrin ligand is referred to as reverse signaling. Highly promiscuous for ephrin-A ligands it binds preferentially EFNA5. Upon activation by EFNA5 regulates cell-cell adhesion, cytoskeletal organization and cell migration. Plays a role in cardiac cells migration and differentiation and regulates the formation of the atrioventricular canal and septum during development probably through activation by EFNA1. Involved in the retinotectal mapping of neurons. May also control the segregation but not the guidance of motor and sensory axons during neuromuscular circuit development. This chain is Ephrin type-A receptor 3 (Epha3), found in Mus musculus (Mouse).